The chain runs to 262 residues: Phosphatidylserine decarboxylase proenzyme (262 aa).

Catalysis depends on charge relay system; for autoendoproteolytic cleavage activity residues Asp86, His142, and Ser226. The active-site Schiff-base intermediate with substrate; via pyruvic acid; for decarboxylase activity is Ser226. Ser226 is subject to Pyruvic acid (Ser); by autocatalysis.

This sequence belongs to the phosphatidylserine decarboxylase family. PSD-B subfamily. Prokaryotic type I sub-subfamily. As to quaternary structure, heterodimer of a large membrane-associated beta subunit and a small pyruvoyl-containing alpha subunit. The cofactor is pyruvate. In terms of processing, is synthesized initially as an inactive proenzyme. Formation of the active enzyme involves a self-maturation process in which the active site pyruvoyl group is generated from an internal serine residue via an autocatalytic post-translational modification. Two non-identical subunits are generated from the proenzyme in this reaction, and the pyruvate is formed at the N-terminus of the alpha chain, which is derived from the carboxyl end of the proenzyme. The autoendoproteolytic cleavage occurs by a canonical serine protease mechanism, in which the side chain hydroxyl group of the serine supplies its oxygen atom to form the C-terminus of the beta chain, while the remainder of the serine residue undergoes an oxidative deamination to produce ammonia and the pyruvoyl prosthetic group on the alpha chain. During this reaction, the Ser that is part of the protease active site of the proenzyme becomes the pyruvoyl prosthetic group, which constitutes an essential element of the active site of the mature decarboxylase.

It is found in the cell membrane. It catalyses the reaction a 1,2-diacyl-sn-glycero-3-phospho-L-serine + H(+) = a 1,2-diacyl-sn-glycero-3-phosphoethanolamine + CO2. Its pathway is phospholipid metabolism; phosphatidylethanolamine biosynthesis; phosphatidylethanolamine from CDP-diacylglycerol: step 2/2. Functionally, catalyzes the formation of phosphatidylethanolamine (PtdEtn) from phosphatidylserine (PtdSer). The sequence is that of Phosphatidylserine decarboxylase proenzyme from Bacillus cereus (strain ZK / E33L).